Consider the following 426-residue polypeptide: PHD finger-containing protein 6 (426 aa).

A PHD-type zinc finger spans residues 9–59 (RSICETCGHQGWKNSLVTCSKCRIACEHCYCMRESSFETSIHFVCADCSMR). Zn(2+)-binding residues include C12, C15, C27, C30, H36, C39, C53, and C56. Disordered stretches follow at residues 122 to 144 (TFRVPRPVSARPPMGLTKPTAGF) and 185 to 205 (RQASKAQAVGEGSKSKVGDGA).

As to quaternary structure, interacts directly with AIPP3/BDT1.

Its function is as follows. Together with AIPP3/BDT1, cooperates to form a BAH-PHD bivalent histone reader complex able to read histone H3 lysine 27 trimethylation (H3K27me3) histone marks in order to regulate transcription, especially to prevent early flowering; promotes AIPP3/BDT1 binding to H3K27me3. The polypeptide is PHD finger-containing protein 6 (Arabidopsis thaliana (Mouse-ear cress)).